Reading from the N-terminus, the 389-residue chain is Alkanesulfonate monooxygenase (389 aa).

The protein belongs to the SsuD family.

The catalysed reaction is an alkanesulfonate + FMNH2 + O2 = an aldehyde + FMN + sulfite + H2O + 2 H(+). Its function is as follows. Catalyzes the desulfonation of aliphatic sulfonates. This chain is Alkanesulfonate monooxygenase, found in Variovorax paradoxus (strain S110).